The sequence spans 238 residues: Pre-protein VI (238 aa).

The propeptide occupies 1-33; the sequence is MDAVNFSILAPRYGSHPMMSAWSGIGTSDMNGG. The amphipathic alpha-helix essential for membrane lytic activity stretch occupies residues 34–54; the sequence is AFNWGGIWSGIKNFGSNVKNW. Residues 36–53 form an involved in endosomal membrane lysis region; sequence NWGGIWSGIKNFGSNVKN. The tract at residues 48–74 is interaction with hexon protein; the sequence is GSNVKNWGSRAWNSQTGKLLRQKLNDT. The Nuclear export signal motif lies at 67-76; sequence LRQKLNDTKV. Positions 153–156 match the PPXY motif motif; it reads PPSY. Positions 187–212 are disordered; it reads TLELKPSDQPPPYSPQSSNMPVTAPV. Positions 219–230 match the Nuclear export signal motif; the sequence is GTLANIVGVGLS. Residues 221-227 are interaction with hexon protein; it reads LANIVGV. The tract at residues 228–238 is binds to importin alpha/beta, involved in hexon nuclear import; that stretch reads GLSNVKRRRCF. Residues 233–236 carry the Nuclear localization signal motif; the sequence is KRRR.

This sequence belongs to the adenoviridae protein VI family. As to quaternary structure, interacts with hexon protein; this interaction allows nuclear import of hexon trimers and possibly pre-capsid assembly. Interacts (via C-terminal NLS) with importin alpha/beta. In terms of assembly, interacts (via PPxY motif) with host NEDD4 ubiquitine ligase; this interaction might play a role in virus intracellular transport during entry. Part of a complex composed of the core-capsid bridging protein, the endosome lysis protein VI and the hexon-linking protein VIII; these interactions bridge the virus core to the capsid. Interacts with peripentonal hexons; this interaction stabilizes the capsid by gluing two peripentonal hexons together and joining them with an adjacent group-of-nine hexon. Heterodimer with the viral protease; disulfide-linked. Interacts with the viral protease. Ubiquitinated by Nedd4 following partial capsid disassembly; which might play a role in intracellular virus movement during entry. Post-translationally, contains the major nuclear import and export signals. Proteolytically removed during virion maturation. The processing of the C-terminus turns the precursor into a mature viral structural protein and abrogates its ability to promote hexon import and act as a potential chaperone protein.

It localises to the host nucleus. The protein resides in the host cytoplasm. It is found in the virion. In terms of biological role, during virus assembly, promotes hexon trimers nuclear import through nuclear pore complexes via an importin alpha/beta-dependent mechanism. By analogy to herpesviruses capsid assembly, might act as a chaperone to promote the formation of the icosahedral capsid. Functionally, structural component of the virion that provides increased stability to the particle shell through its interaction with the core-capsid bridging protein and the hexon-linking protein VIII. Fibers shedding during virus entry into host cell allows the endosome lysis protein to be exposed as a membrane-lytic peptide. Exhibits pH-independent membrane fragmentation activity and probably mediates viral rapid escape from host endosome via organellar membrane lysis. It is not clear if it then remains partially associated with the capsid and involved in the intracellular microtubule-dependent transport of capsid to the nucleus, or if it is lost during endosomal penetration. Cofactor that activates the viral protease. Binds to viral protease in a 1:1 ratio. The polypeptide is Pre-protein VI (Canine adenovirus serotype 1 (strain CLL) (CAdV-1)).